The primary structure comprises 275 residues: Dermonecrotic toxin LamSicTox-alphaIV1ii (275 aa).

His5 is an active-site residue. Residues Glu25 and Asp27 each contribute to the Mg(2+) site. His41 (nucleophile) is an active-site residue. Cystine bridges form between Cys45–Cys51 and Cys47–Cys192. Position 85 (Asp85) interacts with Mg(2+).

It belongs to the arthropod phospholipase D family. Class II subfamily. Mg(2+) is required as a cofactor. In terms of tissue distribution, expressed by the venom gland.

It is found in the secreted. The catalysed reaction is an N-(acyl)-sphingosylphosphocholine = an N-(acyl)-sphingosyl-1,3-cyclic phosphate + choline. It catalyses the reaction an N-(acyl)-sphingosylphosphoethanolamine = an N-(acyl)-sphingosyl-1,3-cyclic phosphate + ethanolamine. The enzyme catalyses a 1-acyl-sn-glycero-3-phosphocholine = a 1-acyl-sn-glycero-2,3-cyclic phosphate + choline. It carries out the reaction a 1-acyl-sn-glycero-3-phosphoethanolamine = a 1-acyl-sn-glycero-2,3-cyclic phosphate + ethanolamine. Its function is as follows. Dermonecrotic toxins cleave the phosphodiester linkage between the phosphate and headgroup of certain phospholipids (sphingolipid and lysolipid substrates), forming an alcohol (often choline) and a cyclic phosphate. This toxin acts on sphingomyelin (SM). It may also act on ceramide phosphoethanolamine (CPE), lysophosphatidylcholine (LPC) and lysophosphatidylethanolamine (LPE), but not on lysophosphatidylserine (LPS), and lysophosphatidylglycerol (LPG). It acts by transphosphatidylation, releasing exclusively cyclic phosphate products as second products. Induces dermonecrosis, hemolysis, increased vascular permeability, edema, inflammatory response, and platelet aggregation. The protein is Dermonecrotic toxin LamSicTox-alphaIV1ii of Loxosceles amazonica (Recluse spider).